Consider the following 118-residue polypeptide: HTH-type transcriptional regulator SarT (118 aa).

The H-T-H motif DNA-binding region spans 55–78 (MRDIISYIGIDQSRIVKSVKELSK).

Belongs to the SarA family.

The protein localises to the cytoplasm. Its function is as follows. Transcriptional regulator acting as an intermediary between major regulators SarA and agr and virulence genes. Represses alpha-hemolysin (hla) gene expression. The protein is HTH-type transcriptional regulator SarT (sarT) of Staphylococcus aureus (strain Mu50 / ATCC 700699).